The primary structure comprises 897 residues: 3'-5' exonuclease DinG (897 aa).

The region spanning 8-161 (VVDLETTGNQ…DEDAATTAKL (154 aa)) is the Exonuclease domain. In terms of domain architecture, Helicase ATP-binding spans 241-496 (SKAVDQLGLT…KAIDQLEKQR (256 aa)). ATP is bound at residue 276-283 (ASLGSGKS). The short motif at 448–451 (DEAH) is the DEAH box element. The Helicase C-terminal domain maps to 703 to 893 (NIDEYVASIV…QFGKLLRQIQ (191 aa)).

It belongs to the helicase family. DinG subfamily. Type 2 sub-subfamily. Monomer in solution.

With respect to regulation, the nuclease activity is inhibited by ATP or ADP. Functionally, 3'-5' exonuclease acting on single-stranded DNA (ssDNA) and RNA (ssRNA) substrates. Displays ssDNA-stimulated ATPase activity, but lacks helicase activity. This is 3'-5' exonuclease DinG from Staphylococcus aureus (strain MRSA252).